The primary structure comprises 422 residues: Biofilm regulator 1 (422 aa).

2 stretches are compositionally biased toward low complexity: residues 1 to 19 (MSSS…TTSA) and 36 to 45 (SGGSNNGNGS). 2 disordered regions span residues 1–86 (MSSS…KCPP) and 116–207 (RLSS…PSHP). Polar residues predominate over residues 46 to 61 (ALKSQISPRLSDTSRI). Low complexity-rich tracts occupy residues 69–81 (TSGS…SSTP) and 120–143 (PTLP…LSPV). Over residues 146–159 (VINTPPQQPQSVSA) the composition is skewed to polar residues. Residues 160 to 194 (STSPNTQYQYYQYQQQSSPIQQQQQQQQATPAATP) show a composition bias toward low complexity. Residues 195–205 (TVMQMAQNQPS) are compositionally biased toward polar residues. A GATA-type zinc finger spans residues 282-307 (CHRCGTTETPEWRRGPKGVRTLCNAC).

As to quaternary structure, interacts with HDA1.

It localises to the nucleus. Its function is as follows. Transcription factor required for hyphal growth, biofilm formation, and virulence. Promotes formation of both conventional and pheromone-stimulated biofilms. Binds and recruits HDA1 to promoters of hypha-specific genes in a rapamycin-dependent manner. Involved in the switch between two heritable states, the white and opaque states. These two cell types differ in many characteristics, including cell structure, mating competence, and virulence. Each state is heritable for many generations, and switching between states occurs stochastically at low frequency. In Candida albicans (strain SC5314 / ATCC MYA-2876) (Yeast), this protein is Biofilm regulator 1 (BRG1).